Consider the following 166-residue polypeptide: Small ribosomal subunit protein uS5 (166 aa).

The S5 DRBM domain occupies 11-74 (LIDKVVHISR…ESAKRTMFEV (64 aa)).

The protein belongs to the universal ribosomal protein uS5 family. As to quaternary structure, part of the 30S ribosomal subunit. Contacts proteins S4 and S8.

Its function is as follows. With S4 and S12 plays an important role in translational accuracy. Located at the back of the 30S subunit body where it stabilizes the conformation of the head with respect to the body. The protein is Small ribosomal subunit protein uS5 of Syntrophobacter fumaroxidans (strain DSM 10017 / MPOB).